We begin with the raw amino-acid sequence, 380 residues long: Flap endonuclease 1-A (380 aa).

Residues 1–105 form an N-domain region; it reads MGIKGLTKLL…QELAKRYSKR (105 aa). Aspartate 34 is a Mg(2+) binding site. Residue arginine 71 coordinates DNA. Positions 87, 159, 161, 180, and 182 each coordinate Mg(2+). Residues 123-254 form an I-domain region; it reads AIEKFSKRTV…QTALKLIRQH (132 aa). Glutamate 159 provides a ligand contact to DNA. Residues glycine 232 and aspartate 234 each coordinate DNA. Residue aspartate 234 participates in Mg(2+) binding. Residues 336-344 are interaction with PCNA; sequence SQGRLESFF. Positions 351–380 are disordered; that stretch reads SVPLKRKDTSEKPTKAVANKKTKGAGGKKK. Over residues 355 to 364 the composition is skewed to basic and acidic residues; it reads KRKDTSEKPT. A compositionally biased stretch (basic residues) spans 368–380; that stretch reads ANKKTKGAGGKKK.

Belongs to the XPG/RAD2 endonuclease family. FEN1 subfamily. Interacts with PCNA. Three molecules of FEN1 bind to one PCNA trimer with each molecule binding to one PCNA monomer. PCNA stimulates the nuclease activity without altering cleavage specificity. The cofactor is Mg(2+). Post-translationally, phosphorylated. Phosphorylation upon DNA damage induces relocalization to the nuclear plasma. Strongly expressed in proliferating tissues: root and shoot apical meristem, tiller bud, leaf, ligule primordia, marginal meristem of young leaves and panicles. Not expressed in mature leaves when exposed to UV.

The protein resides in the nucleus. The protein localises to the nucleolus. Its subcellular location is the nucleoplasm. It localises to the mitochondrion. With respect to regulation, inhibited by NaCl. Structure-specific nuclease with 5'-flap endonuclease and 5'-3' exonuclease activities involved in DNA replication and repair. During DNA replication, cleaves the 5'-overhanging flap structure that is generated by displacement synthesis when DNA polymerase encounters the 5'-end of a downstream Okazaki fragment. It enters the flap from the 5'-end and then tracks to cleave the flap base, leaving a nick for ligation. Also involved in the long patch base excision repair (LP-BER) pathway, by cleaving within the apurinic/apyrimidinic (AP) site-terminated flap. Acts as a genome stabilization factor that prevents flaps from equilibrating into structures that lead to duplications and deletions. Also possesses 5'-3' exonuclease activity on nicked or gapped double-stranded DNA, and exhibits RNase H activity. Also involved in replication and repair of rDNA and in repairing mitochondrial DNA. May be required for cell proliferation. The chain is Flap endonuclease 1-A from Oryza sativa subsp. japonica (Rice).